The sequence spans 1297 residues: Protein ENHANCED DOWNY MILDEW 2 (1297 aa).

A PHD-type 1; degenerate zinc finger spans residues 222-281 (ESVCAICDNGGEILCCEGSCLRSFHATKKDGEDSLCDSLGFNKMQVEAIQKYFCPNCEHK). Positions 237, 241, 275, 278, 285, 288, 306, 311, 316, 319, 346, and 349 each coordinate Zn(2+). The segment at 282 to 352 (IHQCFICKNL…EYTCPLHKCS (71 aa)) adopts a PHD-type 2; atypical zinc-finger fold. The segment at 351–417 (CSVCENGEVK…RVLIYCQEHE (67 aa)) adopts a PHD-type 3; degenerate zinc-finger fold. The Nuclear localization signal 1 motif lies at 445 to 452 (QRRILESH). Disordered stretches follow at residues 471–547 (CGKA…ARDA) and 562–598 (TQEP…IPTL). Over residues 475–487 (SKNSFRSSFPSSK) the composition is skewed to low complexity. The Nuclear localization signal 2 signature appears at 492–499 (TKKHGLVS). A compositionally biased stretch (basic and acidic residues) spans 526 to 547 (KMMEDSREAGKNKLGVKEARDA). 2 consecutive short sequence motifs (nuclear localization signal) follow at residues 610-617 (MKKATEEI) and 979-986 (LKKEGKTK). 2 stretches are compositionally biased toward basic and acidic residues: residues 969-990 (QSDH…DYSG) and 1096-1109 (EVSR…RTSR). Disordered stretches follow at residues 969 to 1017 (QSDH…GELS), 1085 to 1109 (HGCK…RTSR), and 1260 to 1297 (FPLP…WIND).

Interacts with WNK8 in nucleus; this interaction is involved in developmental processes regulation but not in RPP7-dependent disease resistance. Interacts with EML1 and EML2 in nucleus. Component of the ASI1-AIPP1-EDM2 (AAE) RNA regulatory complex composed of at least AIPP1/EDM3, ASI1 and EDM2 and may contain CPL2, AIPP2 and AIPP3/BDT1. Binds directly to AIPP1/EDM3. Co-associates with AIPP1/EDM3 to histone H3 lysine 9 dimethylation (H3K9me2)-marked chromatin and transcripts at a critical proximal polyadenylation site of RPP7 to hamper proximal transcript polyadeylation/termination. Post-translationally, phosphorylated by WNK8.

The protein localises to the nucleus. Its function is as follows. Cellular antisilencing factor and regulator of genome DNA methylation patterns involved in the regulation of chromatin states. Together with SUVH4, monitors repressive epigenetic marks H3K27me1, H3K9me2, and prevents DNA-methylation at CHG sites, affecting especially the expression of transposons and developmentally important genes. Collaboratively with ASI1 and AIPP1/EDM3, the AAE complex regulates alternative RNA processing (e.g. alternative splicing) and epigenetic silencing (e.g. H3K9me2) of intronic heterochromatin-containing genes as well as genic heterochromatin-containing genes by promoting distal 3' polyadenylation. Epigenetic reader that binds DNA and contributes to transcriptional transposable element (TE) silencing by modulating levels of the repressive post-translational histone modifications (PHM) H3K9me2. In cv. Columbia, required for RPP7-dependent disease resistance against the Hyaloperonospora arabidopsidis isolate Hiks1, by promoting levels of RPP7 via alternative polyadenylation (APA), resulting from cooption of epigenetic information at the TE insertion locus COPIA-R7. Exhibits a global role in NLR (nucleotide-binding, leucine-rich repeat) defense genes epigenetic (e.g. H3K9me2 hallmarks) expression control; promotes the accumulation of RPP7, RPP4 and some other proteins, but mediates the repression of several other NLR products, probably to compensate for fitness penalties caused by defense mechanisms. Regulates development processes such as the formation of leaf pavement cells, leaf expansion, fertility and flowering. Prevents FLC accumulation to control flowering. Modulates stomatal development by regulating the methylation-mediated silencing of ERECTA receptor genes (e.g. ER, ERL1 and ERL2) and preventing cell divisions. This Arabidopsis thaliana (Mouse-ear cress) protein is Protein ENHANCED DOWNY MILDEW 2.